We begin with the raw amino-acid sequence, 449 residues long: 23S rRNA (uracil(1939)-C(5))-methyltransferase RlmD (449 aa).

The 59-residue stretch at 12–70 (SKQLSAKQSFSVHQLDHLGAGIAQHQGKVVFIPGALPSETVQAQLTEQKKNYARAKLIK) folds into the TRAM domain. Positions 83, 89, 92, and 170 each coordinate [4Fe-4S] cluster. Residues Gln-282, Phe-311, Asn-316, Glu-332, Asp-359, and Asp-379 each coordinate S-adenosyl-L-methionine. Cys-405 functions as the Nucleophile in the catalytic mechanism.

Belongs to the class I-like SAM-binding methyltransferase superfamily. RNA M5U methyltransferase family. RlmD subfamily.

It catalyses the reaction uridine(1939) in 23S rRNA + S-adenosyl-L-methionine = 5-methyluridine(1939) in 23S rRNA + S-adenosyl-L-homocysteine + H(+). Catalyzes the formation of 5-methyl-uridine at position 1939 (m5U1939) in 23S rRNA. This Shewanella sp. (strain MR-7) protein is 23S rRNA (uracil(1939)-C(5))-methyltransferase RlmD.